Here is a 251-residue protein sequence, read N- to C-terminus: Putative fatty acid elongase DDB_G0274669 (251 aa).

The next 5 helical transmembrane spans lie at Phe51–Leu71, Phe82–Val102, Trp135–Leu155, Tyr177–Val197, and Ala211–Val231.

This sequence belongs to the ELO family.

The protein resides in the membrane. It catalyses the reaction a very-long-chain acyl-CoA + malonyl-CoA + H(+) = a very-long-chain 3-oxoacyl-CoA + CO2 + CoA. Could be implicated in synthesis of very long chain fatty acids. The sequence is that of Putative fatty acid elongase DDB_G0274669 from Dictyostelium discoideum (Social amoeba).